Here is a 261-residue protein sequence, read N- to C-terminus: Small ribosomal subunit protein eS4B (261 aa).

At serine 32 the chain carries Phosphoserine. One can recognise an S4 RNA-binding domain in the interval leucine 42 to valine 105. Lysine 62 participates in a covalent cross-link: Glycyl lysine isopeptide (Lys-Gly) (interchain with G-Cter in ubiquitin). Threonine 115 carries the post-translational modification Phosphothreonine. Residues lysine 134, lysine 161, lysine 168, lysine 174, lysine 179, lysine 211, and lysine 233 each participate in a glycyl lysine isopeptide (Lys-Gly) (interchain with G-Cter in ubiquitin) cross-link. Residue serine 247 is modified to Phosphoserine.

This sequence belongs to the eukaryotic ribosomal protein eS4 family. In terms of assembly, component of the small ribosomal subunit (SSU). Mature yeast ribosomes consist of a small (40S) and a large (60S) subunit. The 40S small subunit contains 1 molecule of ribosomal RNA (18S rRNA) and 33 different proteins (encoded by 57 genes). The large 60S subunit contains 3 rRNA molecules (25S, 5.8S and 5S rRNA) and 46 different proteins (encoded by 81 genes).

Its subcellular location is the cytoplasm. Functionally, component of the ribosome, a large ribonucleoprotein complex responsible for the synthesis of proteins in the cell. The small ribosomal subunit (SSU) binds messenger RNAs (mRNAs) and translates the encoded message by selecting cognate aminoacyl-transfer RNA (tRNA) molecules. The large subunit (LSU) contains the ribosomal catalytic site termed the peptidyl transferase center (PTC), which catalyzes the formation of peptide bonds, thereby polymerizing the amino acids delivered by tRNAs into a polypeptide chain. The nascent polypeptides leave the ribosome through a tunnel in the LSU and interact with protein factors that function in enzymatic processing, targeting, and the membrane insertion of nascent chains at the exit of the ribosomal tunnel. In Saccharomyces cerevisiae (strain ATCC 204508 / S288c) (Baker's yeast), this protein is Small ribosomal subunit protein eS4B.